A 390-amino-acid chain; its full sequence is Magnesium-protoporphyrin IX monomethyl ester [oxidative] cyclase (390 aa).

The protein belongs to the AcsF family. Requires Fe cation as cofactor.

It carries out the reaction Mg-protoporphyrin IX 13-monomethyl ester + 3 NADPH + 3 O2 + 2 H(+) = 3,8-divinyl protochlorophyllide a + 3 NADP(+) + 5 H2O. Its pathway is porphyrin-containing compound metabolism; chlorophyll biosynthesis (light-independent). Functionally, catalyzes the formation of the isocyclic ring in chlorophyll biosynthesis. Mediates the cyclase reaction, which results in the formation of divinylprotochlorophyllide (Pchlide) characteristic of all chlorophylls from magnesium-protoporphyrin IX 13-monomethyl ester (MgPMME). This is Magnesium-protoporphyrin IX monomethyl ester [oxidative] cyclase from Prochlorococcus marinus (strain MIT 9312).